The following is a 321-amino-acid chain: Olfactory receptor 52P1 (321 aa).

At 1-27 the chain is on the extracellular side; that stretch reads MESPNHTDVDPSVFFLLGIPGLEQFHL. An N-linked (GlcNAc...) asparagine glycan is attached at asparagine 5. Residues 28-48 traverse the membrane as a helical segment; it reads WLSLPVCGLGTATIVGNITIL. Residues 49-56 are Cytoplasmic-facing; that stretch reads VVVATEPV. A helical transmembrane segment spans residues 57-77; it reads LHKPVYLFLCMLSTIDLAASV. Over 78–101 the chain is Extracellular; the sequence is STVPKLLAIFWCGAGHISASACLA. Cysteines 99 and 191 form a disulfide. Residues 102 to 122 form a helical membrane-spanning segment; that stretch reads QMFFIHAFCMMESTVLLAMAF. Residues 123-141 lie on the Cytoplasmic side of the membrane; it reads DRYVAICHPLRYATILTDT. Residues 142–162 traverse the membrane as a helical segment; sequence IIAHIGVAAVVRGSLLMLPCP. Residues 163-198 are Extracellular-facing; the sequence is FLIGRLNFCQSHVILHTYCEHMAVVKLACGDTRPNR. The helical transmembrane segment at 199 to 219 threads the bilayer; that stretch reads VYGLTAALLVIGVDLFCIGLS. The Cytoplasmic segment spans residues 220 to 239; the sequence is YALSAQAVLRLSSHEARSKA. The helical transmembrane segment at 240 to 260 threads the bilayer; it reads LGTCGSHVCVILISYTPALFS. Over 261–275 the chain is Extracellular; the sequence is FFTHRFGHHVPVHIH. Residues 276–296 traverse the membrane as a helical segment; it reads ILLANVYLLLPPALNPVVYGV. Topologically, residues 297–315 are cytoplasmic; it reads KTKQIRKRVVRVFQSGQGM.

This sequence belongs to the G-protein coupled receptor 1 family.

It is found in the cell membrane. In terms of biological role, odorant receptor. This is Olfactory receptor 52P1 from Homo sapiens (Human).